The following is a 125-amino-acid chain: Small ribosomal subunit protein uS12 (125 aa).

Residue D89 is modified to 3-methylthioaspartic acid.

Belongs to the universal ribosomal protein uS12 family. As to quaternary structure, part of the 30S ribosomal subunit. Contacts proteins S8 and S17. May interact with IF1 in the 30S initiation complex.

With S4 and S5 plays an important role in translational accuracy. Its function is as follows. Interacts with and stabilizes bases of the 16S rRNA that are involved in tRNA selection in the A site and with the mRNA backbone. Located at the interface of the 30S and 50S subunits, it traverses the body of the 30S subunit contacting proteins on the other side and probably holding the rRNA structure together. The combined cluster of proteins S8, S12 and S17 appears to hold together the shoulder and platform of the 30S subunit. The chain is Small ribosomal subunit protein uS12 from Bordetella petrii (strain ATCC BAA-461 / DSM 12804 / CCUG 43448).